Here is a 95-residue protein sequence, read N- to C-terminus: Translation initiation factor 1A (95 aa).

The 75-residue stretch at 7–81 (GRKNLRMPED…DKADVTWRYE (75 aa)) folds into the S1-like domain.

Belongs to the eIF-1A family.

Functionally, seems to be required for maximal rate of protein biosynthesis. Enhances ribosome dissociation into subunits and stabilizes the binding of the initiator Met-tRNA(I) to 40 S ribosomal subunits. This Halobacterium salinarum (strain ATCC 29341 / DSM 671 / R1) protein is Translation initiation factor 1A (eIF1A).